A 399-amino-acid polypeptide reads, in one-letter code: Beta-1,4-galactosyltransferase 1 (399 aa).

At 1 to 24 the chain is on the cytoplasmic side; that stretch reads MRFREQFLGGSAAMPGATLQRACR. The helical; Signal-anchor for type II membrane protein transmembrane segment at 25 to 44 threads the bilayer; sequence LLVAVCALHLGVTLVYYLSG. Over 45–399 the chain is Lumenal; sequence RDLSRLPQLV…QITVDIGTPR (355 aa). Residues 61–113 form a disordered region; the sequence is QGGTNGAAASKQPPGEQRPRGARPPPPLGVSPKPRPGLDSSPGAASGPGLKSN. Positions 82 to 95 are enriched in pro residues; that stretch reads ARPPPPLGVSPKPR. An N-linked (GlcNAc...) asparagine glycan is attached at Asn-113. A disulfide bond links Cys-131 and Cys-173. UDP-alpha-D-galactose is bound by residues 184 to 188, 223 to 225, 250 to 251, and Trp-311; these read PFRNR, FNR, and VD. Cys-244 and Cys-263 are joined by a disulfide. Position 251 (Asp-251) interacts with Mn(2+). 313–316 is an N-acetyl-D-glucosamine binding site; it reads GEDD. His-344 contributes to the Mn(2+) binding site. 344–346 serves as a coordination point for UDP-alpha-D-galactose; it reads HSR. Arg-356 is an N-acetyl-D-glucosamine binding site.

This sequence belongs to the glycosyltransferase 7 family. Homodimer; and heterodimer with alpha-lactalbumin to form lactose synthase. Interacts (via N-terminal cytoplasmic domain) with UBE2Q1 (via N-terminus); the interaction is direct. Mn(2+) is required as a cofactor. Post-translationally, the soluble form derives from the membrane forms by proteolytic processing.

It localises to the golgi apparatus. It is found in the golgi stack membrane. Its subcellular location is the cell membrane. The protein localises to the cell surface. The protein resides in the cell projection. It localises to the filopodium. It is found in the secreted. It catalyses the reaction D-glucose + UDP-alpha-D-galactose = lactose + UDP + H(+). It carries out the reaction an N-acetyl-beta-D-glucosaminyl derivative + UDP-alpha-D-galactose = a beta-D-galactosyl-(1-&gt;4)-N-acetyl-beta-D-glucosaminyl derivative + UDP + H(+). The enzyme catalyses N-acetyl-D-glucosamine + UDP-alpha-D-galactose = beta-D-galactosyl-(1-&gt;4)-N-acetyl-D-glucosamine + UDP + H(+). The catalysed reaction is a beta-D-GlcNAc-(1-&gt;3)-beta-D-Gal-(1-&gt;4)-beta-D-Glc-(1&lt;-&gt;1)-Cer(d18:1(4E)) + UDP-alpha-D-galactose = a neolactoside nLc4Cer(d18:1(4E)) + UDP + H(+). It catalyses the reaction a beta-D-glucosylceramide + UDP-alpha-D-galactose = a beta-D-galactosyl-(1-&gt;4)-beta-D-glucosyl-(1&lt;-&gt;1)-ceramide + UDP + H(+). It carries out the reaction a neolactoside IV(3)-beta-GlcNAc-nLc4Cer + UDP-alpha-D-galactose = a neolactoside nLc6Cer + UDP + H(+). It participates in protein modification; protein glycosylation. In terms of biological role, the Golgi complex form catalyzes the production of lactose in the lactating mammary gland and could also be responsible for the synthesis of complex-type N-linked oligosaccharides in many glycoproteins as well as the carbohydrate moieties of glycolipids. Functionally, the cell surface form functions as a recognition molecule during a variety of cell to cell and cell to matrix interactions, as those occurring during development and egg fertilization, by binding to specific oligosaccharide ligands on opposing cells or in the extracellular matrix. The secreted form is responsible for the synthesis of complex-type to N-linked oligosaccharides in many glycoproteins as well as the carbohydrate moieties of glycolipids. The polypeptide is Beta-1,4-galactosyltransferase 1 (Mus musculus (Mouse)).